A 712-amino-acid chain; its full sequence is DNA ligase (712 aa).

Residues 53–57, 103–104, and glutamate 133 each bind NAD(+); these read DAEFD and SL. Lysine 135 serves as the catalytic N6-AMP-lysine intermediate. Residues arginine 156, glutamate 196, lysine 315, and lysine 339 each contribute to the NAD(+) site. Zn(2+) is bound by residues cysteine 433, cysteine 436, cysteine 452, and cysteine 458. Residues 622–711 enclose the BRCT domain; that stretch reads SIERTLEGLS…PERDAEDGEP (90 aa).

This sequence belongs to the NAD-dependent DNA ligase family. LigA subfamily. Mg(2+) serves as cofactor. Mn(2+) is required as a cofactor.

It catalyses the reaction NAD(+) + (deoxyribonucleotide)n-3'-hydroxyl + 5'-phospho-(deoxyribonucleotide)m = (deoxyribonucleotide)n+m + AMP + beta-nicotinamide D-nucleotide.. In terms of biological role, DNA ligase that catalyzes the formation of phosphodiester linkages between 5'-phosphoryl and 3'-hydroxyl groups in double-stranded DNA using NAD as a coenzyme and as the energy source for the reaction. It is essential for DNA replication and repair of damaged DNA. This Mycolicibacterium gilvum (strain PYR-GCK) (Mycobacterium gilvum (strain PYR-GCK)) protein is DNA ligase.